The chain runs to 325 residues: Chain length determinant protein (325 aa).

Residues 1–31 (MRVENNNVSGQNLDPEQIDLIDLLVQLWRGK) lie on the Cytoplasmic side of the membrane. The helical transmembrane segment at 32–52 (MTIIISVIVAIVLAIGYLVVA) threads the bilayer. Over 53 to 294 (KEKWTSTAIV…LPIRRDSPKK (242 aa)) the chain is Periplasmic. The chain crosses the membrane as a helical span at residues 295-315 (AITLILAVLLGGMVGAGIVLG). Over 316 to 325 (RNALRNYNAK) the chain is Cytoplasmic.

This sequence belongs to the WzzB/Cld/Rol family.

The protein localises to the cell inner membrane. It functions in the pathway bacterial outer membrane biogenesis; lipopolysaccharide biosynthesis. Confers a modal distribution of chain length on the O-antigen component of lipopolysaccharide (LPS). Gives rise to a reduced number of short chain molecules and increases in numbers of longer molecules, with a modal value of 13 (in strain O111/M92) and of 17 (in strain K12). This chain is Chain length determinant protein (wzzB), found in Escherichia coli.